The sequence spans 367 residues: Quinolinate synthase (367 aa).

Iminosuccinate is bound by residues His64 and Ser82. A [4Fe-4S] cluster-binding site is contributed by Cys127. Iminosuccinate contacts are provided by residues 153–155 (YVN) and Ser170. Cys216 is a binding site for [4Fe-4S] cluster. Iminosuccinate-binding positions include 242–244 (HPE) and Thr259. Residue Cys302 participates in [4Fe-4S] cluster binding.

This sequence belongs to the quinolinate synthase family. Type 2 subfamily. [4Fe-4S] cluster serves as cofactor.

It is found in the cytoplasm. The enzyme catalyses iminosuccinate + dihydroxyacetone phosphate = quinolinate + phosphate + 2 H2O + H(+). It participates in cofactor biosynthesis; NAD(+) biosynthesis; quinolinate from iminoaspartate: step 1/1. Catalyzes the condensation of iminoaspartate with dihydroxyacetone phosphate to form quinolinate. In Caulobacter vibrioides (strain ATCC 19089 / CIP 103742 / CB 15) (Caulobacter crescentus), this protein is Quinolinate synthase.